The primary structure comprises 396 residues: NADH-ubiquinone oxidoreductase 49 kDa subunit (396 aa).

Belongs to the complex I 49 kDa subunit family.

The protein resides in the mitochondrion. The catalysed reaction is a ubiquinone + NADH + 5 H(+)(in) = a ubiquinol + NAD(+) + 4 H(+)(out). Its function is as follows. Core subunit of the mitochondrial membrane respiratory chain NADH dehydrogenase (Complex I) that is believed to belong to the minimal assembly required for catalysis. Complex I functions in the transfer of electrons from NADH to the respiratory chain. The immediate electron acceptor for the enzyme is believed to be ubiquinone. Component of the iron-sulfur (IP) fragment of the enzyme. Component of the iron-sulfur (IP) fragment of the enzyme. The sequence is that of NADH-ubiquinone oxidoreductase 49 kDa subunit (NAD7) from Reclinomonas americana.